A 182-amino-acid polypeptide reads, in one-letter code: UPF0301 protein NMB1336 (182 aa).

The protein belongs to the UPF0301 (AlgH) family.

In Neisseria meningitidis serogroup B (strain ATCC BAA-335 / MC58), this protein is UPF0301 protein NMB1336.